A 145-amino-acid polypeptide reads, in one-letter code: 3-dehydroquinate dehydratase (145 aa).

Tyrosine 24 (proton acceptor) is an active-site residue. The substrate site is built by asparagine 75, histidine 81, and aspartate 88. The active-site Proton donor is the histidine 101. Substrate-binding positions include 102-103 (IS) and arginine 112.

Belongs to the type-II 3-dehydroquinase family. As to quaternary structure, homododecamer.

The catalysed reaction is 3-dehydroquinate = 3-dehydroshikimate + H2O. It participates in metabolic intermediate biosynthesis; chorismate biosynthesis; chorismate from D-erythrose 4-phosphate and phosphoenolpyruvate: step 3/7. Functionally, catalyzes a trans-dehydration via an enolate intermediate. In Rhizobium johnstonii (strain DSM 114642 / LMG 32736 / 3841) (Rhizobium leguminosarum bv. viciae), this protein is 3-dehydroquinate dehydratase.